A 614-amino-acid chain; its full sequence is DNA repair protein rad26 (614 aa).

The span at 29 to 43 shows a compositional bias: low complexity; that stretch reads QAQTQVQAQSSQVVV. Disordered regions lie at residues 29–76 and 157–214; these read QAQT…QASL and KKMK…TAED. Composition is skewed to polar residues over residues 50–76 and 181–190; these read QNLN…QASL and LLSSSDQLAK. The span at 191-207 shows a compositional bias: basic residues; sequence STKHAAKNSPSKKKRKT.

In terms of assembly, interacts with cds1.

The protein localises to the nucleus. Functionally, involved in cell cycle arrest when DNA synthesis is inhibited by hydroxyurea, and in mitosis arrest after treatment with DNA-damaging agents. This protein is S phase-specific. The sequence is that of DNA repair protein rad26 (rad26) from Schizosaccharomyces pombe (strain 972 / ATCC 24843) (Fission yeast).